The sequence spans 170 residues: 3-hydroxyanthranilate 3,4-dioxygenase (170 aa).

Arg-44 serves as a coordination point for O2. Fe cation contacts are provided by His-48, Glu-54, and His-92. Residue Glu-54 participates in substrate binding. Substrate contacts are provided by Arg-96 and Glu-106. Residues Cys-121, Cys-124, Cys-158, and Cys-161 each coordinate a divalent metal cation.

Belongs to the 3-HAO family. Requires Fe(2+) as cofactor.

It is found in the cytoplasm. It carries out the reaction 3-hydroxyanthranilate + O2 = (2Z,4Z)-2-amino-3-carboxymuconate 6-semialdehyde. The protein operates within cofactor biosynthesis; NAD(+) biosynthesis; quinolinate from L-kynurenine: step 3/3. Its function is as follows. Catalyzes the oxidative ring opening of 3-hydroxyanthranilate to 2-amino-3-carboxymuconate semialdehyde, which spontaneously cyclizes to quinolinate. The chain is 3-hydroxyanthranilate 3,4-dioxygenase from Scheffersomyces stipitis (strain ATCC 58785 / CBS 6054 / NBRC 10063 / NRRL Y-11545) (Yeast).